A 1056-amino-acid chain; its full sequence is Sucrose-phosphate synthase (1056 aa).

Basic and acidic residues predominate over residues 112–123 (HVERERGRREAT). Residues 112-132 (HVERERGRREATADMSEDLSE) are disordered. Phosphoserine occurs at positions 158 and 424. Residues 681-700 (NWQRIDEGSENSDTDSAGDS) form a disordered region.

Belongs to the glycosyltransferase 1 family. In terms of assembly, homodimer or homotetramer. In terms of processing, phosphorylated at Ser-158 and Ser-424.

The catalysed reaction is beta-D-fructose 6-phosphate + UDP-alpha-D-glucose = sucrose 6(F)-phosphate + UDP + H(+). The protein operates within glycan biosynthesis; sucrose biosynthesis; sucrose from D-fructose 6-phosphate and UDP-alpha-D-glucose: step 1/2. With respect to regulation, activity is regulated by phosphorylation and moderated by concentration of metabolites and light. Its function is as follows. Plays a role in photosynthetic sucrose synthesis by catalyzing the rate-limiting step of sucrose biosynthesis from UDP-glucose and fructose- 6-phosphate. Involved in the regulation of carbon partitioning in the leaves of plants. May regulate the synthesis of sucrose and therefore play a major role as a limiting factor in the export of photoassimilates out of the leaf. Plays a role for sucrose availability that is essential for plant growth and fiber elongation. In Spinacia oleracea (Spinach), this protein is Sucrose-phosphate synthase (SPS1).